Reading from the N-terminus, the 286-residue chain is Co-chaperone protein DjlA (286 aa).

The Periplasmic portion of the chain corresponds to 1–6; sequence MQFIGK. Residues 7 to 31 traverse the membrane as a helical segment; sequence IIGFFIGYKLFGGLFGGLLGIFIGH. At 32-286 the chain is on the cytoplasmic side; sequence LADKKLYELG…DLICKTKGWK (255 aa). The J domain occupies 220-286; sequence DAYTVLGINE…DLICKTKGWK (67 aa).

In terms of assembly, homodimer.

It is found in the cell inner membrane. Regulatory DnaK co-chaperone. Direct interaction between DnaK and DjlA is needed for the induction of the wcaABCDE operon, involved in the synthesis of a colanic acid polysaccharide capsule, possibly through activation of the RcsB/RcsC phosphotransfer signaling pathway. The colanic acid capsule may help the bacterium survive conditions outside the host. The sequence is that of Co-chaperone protein DjlA from Haemophilus ducreyi (strain 35000HP / ATCC 700724).